A 435-amino-acid chain; its full sequence is GTPase Der (435 aa).

2 consecutive EngA-type G domains span residues 4–167 (KIVA…SKND) and 175–350 (TKIA…QSLS). Residues 10–17 (GKPNVGKS), 57–61 (DTGGI), 119–122 (NKYD), 181–188 (GKPNVGKS), 228–232 (DTAGI), and 293–296 (NKWD) contribute to the GTP site. In terms of domain architecture, KH-like spans 351-435 (VKVKTYVLNE…PINLIFRERK (85 aa)).

Belongs to the TRAFAC class TrmE-Era-EngA-EngB-Septin-like GTPase superfamily. EngA (Der) GTPase family. As to quaternary structure, associates with the 50S ribosomal subunit.

In terms of biological role, GTPase that plays an essential role in the late steps of ribosome biogenesis. The protein is GTPase Der of Mycoplasma capricolum subsp. capricolum (strain California kid / ATCC 27343 / NCTC 10154).